Reading from the N-terminus, the 492-residue chain is Catalase-1 (492 aa).

Residues His-65 and Asn-138 contribute to the active site. Tyr-348 provides a ligand contact to heme.

It belongs to the catalase family. In terms of assembly, homotetramer and heterotetramer. At least six or seven isozymes are produced from a mixture of 3 gene products. Interacts with NCA1. Interacts with LSD1. Heme serves as cofactor.

It is found in the cytoplasm. The enzyme catalyses 2 H2O2 = O2 + 2 H2O. Occurs in almost all aerobically respiring organisms and serves to protect cells from the toxic effects of hydrogen peroxide. The polypeptide is Catalase-1 (CAT1) (Arabidopsis thaliana (Mouse-ear cress)).